A 213-amino-acid chain; its full sequence is MADIEGLLHEVADAVISCKKEKVLEAVEKARAEVPPEEIIEKGLSAGMNQVGVLFERGKLFLPHVMMAADAMTTGVKLLEADLPAGAEKKLGVIVNGTVEGDVHDIGKSIVSTMLQSAGFEVHDIGRDVPIRDFIEKAKETDADMIGISALMTTTLQGQRDVIELLKEEGLRSRVKVMVGGAPATQAWADKIGADCYAENASEAVAKAKELLL.

A B12-binding N-terminal domain is found at 1 to 91; it reads MADIEGLLHE…DLPAGAEKKL (91 aa). The region spanning 92-213 is the B12-binding domain; the sequence is GVIVNGTVEG…AVAKAKELLL (122 aa). His-104 provides a ligand contact to methylcob(III)alamin.

It belongs to the methylamine corrinoid protein family.

The protein operates within one-carbon metabolism; methanogenesis from dimethylamine. Acts as a methyl group carrier between MtbB and MtbA. In Methanosarcina acetivorans (strain ATCC 35395 / DSM 2834 / JCM 12185 / C2A), this protein is Dimethylamine corrinoid protein 3 (mtbC3).